Reading from the N-terminus, the 200-residue chain is 3-isopropylmalate dehydratase small subunit (200 aa).

It belongs to the LeuD family. LeuD type 1 subfamily. As to quaternary structure, heterodimer of LeuC and LeuD.

It carries out the reaction (2R,3S)-3-isopropylmalate = (2S)-2-isopropylmalate. It functions in the pathway amino-acid biosynthesis; L-leucine biosynthesis; L-leucine from 3-methyl-2-oxobutanoate: step 2/4. Its function is as follows. Catalyzes the isomerization between 2-isopropylmalate and 3-isopropylmalate, via the formation of 2-isopropylmaleate. The sequence is that of 3-isopropylmalate dehydratase small subunit from Yersinia pseudotuberculosis serotype I (strain IP32953).